The following is a 150-amino-acid chain: Small heat shock protein HspE (150 aa).

Positions 27–137 (VDNGDTYPPY…KPRQIAIDVA (111 aa)) constitute a sHSP domain.

Belongs to the small heat shock protein (HSP20) family.

The sequence is that of Small heat shock protein HspE (hspE) from Bradyrhizobium diazoefficiens (strain JCM 10833 / BCRC 13528 / IAM 13628 / NBRC 14792 / USDA 110).